Reading from the N-terminus, the 595-residue chain is MLLLLLLLPPLLCGRVGAKEQKDYLLTMQKSVTVQEGLCVSVLCSFSYPQNGWTASDPVHGYWFRAGDHVSRNIPVATNNPARAVQEETRDRFHLLGDPQNKDCTLSIRDTRESDAGTYVFCVERGNMKWNYKYDQLSVNVTASQDLLSRYRLEVPESVTVQEGLCVSVPCSVLYPHYNWTASSPVYGSWFKEGADIPWDIPVATNTPSGKVQEDTHGRFLLLGDPQTNNCSLSIRDARKGDSGKYYFQVERGSRKWNYIYDKLSVHVTALTHMPTFSIPGTLESGHPRNLTCSVPWACEQGTPPTITWMGASVSSLDPTITRSSMLSLIPQPQDHGTSLTCQVTLPGAGVTMTRAVRLNISYPPQNLTMTVFQGDGTASTTLRNGSALSVLEGQSLHLVCAVDSNPPARLSWTWGSLTLSPSQSSNLGVLELPRVHVKDEGEFTCRAQNPLGSQHISLSLSLQNEYTGKMRPISGVTLGAFGGAGATALVFLYFCIIFVVVRSCRKKSARPAVGVGDTGMEDANAVRGSASQGPLIESPADDSPPHHAPPALATPSPEEGEIQYASLSFHKARPQYPQEQEAIGYEYSEINIPK.

An N-terminal signal peptide occupies residues 1 to 18 (MLLLLLLLPPLLCGRVGA). Ig-like V-type domains follow at residues 19-142 (KEQK…VNVT) and 143-269 (ASQD…VHVT). Residues 19-481 (KEQKDYLLTM…RPISGVTLGA (463 aa)) are Extracellular-facing. A disulfide bond links cysteine 44 and cysteine 104. N-linked (GlcNAc...) asparagine glycosylation is found at asparagine 140, asparagine 179, asparagine 230, and asparagine 290. 3 disulfides stabilise this stretch: cysteine 166-cysteine 299, cysteine 171-cysteine 231, and cysteine 293-cysteine 342. The Ig-like C2-type 1 domain occupies 275 to 358 (PTFSIPGTLE…AGVTMTRAVR (84 aa)). 3 N-linked (GlcNAc...) asparagine glycosylation sites follow: asparagine 360, asparagine 367, and asparagine 385. Residues 365-462 (PQNLTMTVFQ…GSQHISLSLS (98 aa)) form the Ig-like C2-type 2 domain. Cysteines 401 and 446 form a disulfide. Residues 482–502 (FGGAGATALVFLYFCIIFVVV) form a helical membrane-spanning segment. Residues 503–595 (RSCRKKSARP…YEYSEINIPK (93 aa)) are Cytoplasmic-facing. Residues 512 to 560 (PAVGVGDTGMEDANAVRGSASQGPLIESPADDSPPHHAPPALATPSPEE) are disordered. Positions 563-568 (IQYASL) match the ITIM motif motif. 2 positions are modified to phosphotyrosine: tyrosine 565 and tyrosine 588. The SLAM-like motif signature appears at 586-591 (YEYSEI).

It belongs to the immunoglobulin superfamily. SIGLEC (sialic acid binding Ig-like lectin) family. As to expression, isoform Short is highly expressed in spleen, small intestine and adrenal gland; it is lower expressed in thyroid, placenta, brain, stomach, bone marrow, spinal cord and breast. Isoform Long is highly expressed in spleen, small intestine and bone marrow; it is lower expressed in thyroid, placenta, thymus, trachea, stomach, lung, adrenal gland, fetal brain and testis.

Its subcellular location is the membrane. Putative adhesion molecule that mediates sialic-acid dependent binding to cells. The sialic acid recognition site may be masked by cis interactions with sialic acids on the same cell surface. This is Sialic acid-binding Ig-like lectin 12 (SIGLEC12) from Homo sapiens (Human).